Consider the following 56-residue polypeptide: Large ribosomal subunit protein bL32c (56 aa).

It belongs to the bacterial ribosomal protein bL32 family.

It localises to the plastid. It is found in the chloroplast. The polypeptide is Large ribosomal subunit protein bL32c (Huperzia lucidula (Shining clubmoss)).